The sequence spans 373 residues: PqqA peptide cyclase (373 aa).

Residues 9 to 224 form the Radical SAM core domain; that stretch reads LTKPRWLLAE…QSYKEKVKGR (216 aa). The [4Fe-4S] cluster site is built by cysteine 23, cysteine 27, and cysteine 30.

The protein belongs to the radical SAM superfamily. PqqE family. In terms of assembly, interacts with PqqD. The interaction is necessary for activity of PqqE. Requires [4Fe-4S] cluster as cofactor.

The enzyme catalyses [PQQ precursor protein] + S-adenosyl-L-methionine = E-Y cross-linked-[PQQ precursor protein] + 5'-deoxyadenosine + L-methionine + H(+). It participates in cofactor biosynthesis; pyrroloquinoline quinone biosynthesis. Catalyzes the cross-linking of a glutamate residue and a tyrosine residue in the PqqA protein as part of the biosynthesis of pyrroloquinoline quinone (PQQ). The chain is PqqA peptide cyclase from Methylococcus capsulatus (strain ATCC 33009 / NCIMB 11132 / Bath).